The chain runs to 128 residues: uncharacterized protein (128 aa).

Cys10 and Cys13 form a disulfide bridge.

Belongs to the ArsC family.

This is an uncharacterized protein from Ureaplasma parvum serovar 3 (strain ATCC 700970).